The chain runs to 560 residues: Glucose-6-phosphate isomerase, cytosolic (560 aa).

Alanine 2 is subject to N-acetylalanine. Residue glutamate 361 is the Proton donor of the active site. Residues histidine 392 and lysine 517 contribute to the active site.

It belongs to the GPI family. As to quaternary structure, homodimer.

It is found in the cytoplasm. The enzyme catalyses alpha-D-glucose 6-phosphate = beta-D-fructose 6-phosphate. It functions in the pathway carbohydrate degradation; glycolysis; D-glyceraldehyde 3-phosphate and glycerone phosphate from D-glucose: step 2/4. The chain is Glucose-6-phosphate isomerase, cytosolic (PGIC) from Arabidopsis lyrata subsp. petraea (Northern rock-cress).